Reading from the N-terminus, the 1106-residue chain is Probable LRR receptor-like serine/threonine-protein kinase At1g74360 (1106 aa).

The signal sequence occupies residues 1–34 (MTMVTRVIMTDDDSQSLCFLCFLLFFFITAIAVA). The Extracellular segment spans residues 35 to 736 (GDSLDSDREV…PRTLLLIWIS (702 aa)). 7 LRR repeats span residues 86 to 109 (RSRV…NFSA), 110 to 134 (LTEL…LSRC), 136 to 156 (NLKH…LPGL), 157 to 182 (SNLE…LFCN), 184 to 204 (LVVA…IFNG), 205 to 226 (CRNL…WTGF), and 227 to 250 (GRLV…MFRG). N-linked (GlcNAc...) asparagine glycosylation is found at N93 and N106. An N-linked (GlcNAc...) asparagine glycan is attached at N141. Residues N188 and N193 are each glycosylated (N-linked (GlcNAc...) asparagine). 2 N-linked (GlcNAc...) asparagine glycosylation sites follow: N242 and N251. LRR repeat units follow at residues 252–275 (CTLQ…VSNC), 276–299 (QNLN…IGSI), 300–323 (SSLK…LLNL), 325–346 (NLVF…IFGR), 348–371 (TQVK…NILK), 372–396 (LPNL…ISQI), 398–419 (SLKF…EYGN), 420–443 (MPGL…SFGK), 445–468 (TSLL…IGNC), 470–492 (SLLW…LTRM), 566–593 (VRTL…ISQM), 594–617 (DRLS…IGQL), 619–640 (LAFL…IGNL), 641–664 (KCLQ…LNDL), and 666–690 (ELSK…QVAT). N-linked (GlcNAc...) asparagine glycans are attached at residues N309 and N322. N-linked (GlcNAc...) asparagine glycans are attached at residues N365, N374, N384, and N408. Residues N454 and N467 are each glycosylated (N-linked (GlcNAc...) asparagine). N623, N628, N652, N671, N709, and N713 each carry an N-linked (GlcNAc...) asparagine glycan. The chain crosses the membrane as a helical span at residues 737 to 757 (LALALAFIACLVVSGIVLMVV). Topologically, residues 758-1106 (KASREAEIDL…GLSSQGYIEM (349 aa)) are cytoplasmic. A phosphothreonine mark is found at T803 and T811. One can recognise a Protein kinase domain in the interval 814-1095 (FSEERVVGRG…VKISGKAELF (282 aa)). Residues 820-828 (VGRGGYGTV) and K842 each bind ATP. The active-site Proton acceptor is D941. Y983 bears the Phosphotyrosine mark. At T991 the chain carries Phosphothreonine.

This sequence belongs to the protein kinase superfamily. Ser/Thr protein kinase family.

The protein localises to the mitochondrion membrane. It catalyses the reaction L-seryl-[protein] + ATP = O-phospho-L-seryl-[protein] + ADP + H(+). The catalysed reaction is L-threonyl-[protein] + ATP = O-phospho-L-threonyl-[protein] + ADP + H(+). The polypeptide is Probable LRR receptor-like serine/threonine-protein kinase At1g74360 (Arabidopsis thaliana (Mouse-ear cress)).